The primary structure comprises 260 residues: 5'-nucleotidase SurE (260 aa).

D8, D9, S39, and N96 together coordinate a divalent metal cation.

The protein belongs to the SurE nucleotidase family. The cofactor is a divalent metal cation.

It localises to the cytoplasm. It carries out the reaction a ribonucleoside 5'-phosphate + H2O = a ribonucleoside + phosphate. Nucleotidase that shows phosphatase activity on nucleoside 5'-monophosphates. The chain is 5'-nucleotidase SurE from Moorella thermoacetica (strain ATCC 39073 / JCM 9320).